The chain runs to 331 residues: Holliday junction branch migration complex subunit RuvB (331 aa).

Positions 1 to 182 (MDDRMVDQAL…FGVHLRLEYY (182 aa)) are large ATPase domain (RuvB-L). Residues Leu-21, Arg-22, Gly-63, Lys-66, Thr-67, Thr-68, 129-131 (EDF), Arg-172, Tyr-182, and Arg-219 contribute to the ATP site. Thr-67 is a binding site for Mg(2+). Positions 183–253 (NENDLKEIII…TTKQALQLLQ (71 aa)) are small ATPAse domain (RuvB-S). The segment at 256–331 (AEGLDYIDHK…AYEHFKNFNK (76 aa)) is head domain (RuvB-H). Arg-292, Arg-311, and Arg-316 together coordinate DNA.

This sequence belongs to the RuvB family. In terms of assembly, homohexamer. Forms an RuvA(8)-RuvB(12)-Holliday junction (HJ) complex. HJ DNA is sandwiched between 2 RuvA tetramers; dsDNA enters through RuvA and exits via RuvB. An RuvB hexamer assembles on each DNA strand where it exits the tetramer. Each RuvB hexamer is contacted by two RuvA subunits (via domain III) on 2 adjacent RuvB subunits; this complex drives branch migration. In the full resolvosome a probable DNA-RuvA(4)-RuvB(12)-RuvC(2) complex forms which resolves the HJ.

The protein resides in the cytoplasm. The catalysed reaction is ATP + H2O = ADP + phosphate + H(+). Functionally, the RuvA-RuvB-RuvC complex processes Holliday junction (HJ) DNA during genetic recombination and DNA repair, while the RuvA-RuvB complex plays an important role in the rescue of blocked DNA replication forks via replication fork reversal (RFR). RuvA specifically binds to HJ cruciform DNA, conferring on it an open structure. The RuvB hexamer acts as an ATP-dependent pump, pulling dsDNA into and through the RuvAB complex. RuvB forms 2 homohexamers on either side of HJ DNA bound by 1 or 2 RuvA tetramers; 4 subunits per hexamer contact DNA at a time. Coordinated motions by a converter formed by DNA-disengaged RuvB subunits stimulates ATP hydrolysis and nucleotide exchange. Immobilization of the converter enables RuvB to convert the ATP-contained energy into a lever motion, pulling 2 nucleotides of DNA out of the RuvA tetramer per ATP hydrolyzed, thus driving DNA branch migration. The RuvB motors rotate together with the DNA substrate, which together with the progressing nucleotide cycle form the mechanistic basis for DNA recombination by continuous HJ branch migration. Branch migration allows RuvC to scan DNA until it finds its consensus sequence, where it cleaves and resolves cruciform DNA. This is Holliday junction branch migration complex subunit RuvB from Staphylococcus haemolyticus (strain JCSC1435).